The primary structure comprises 145 residues: D-aminoacyl-tRNA deacylase (145 aa).

The Gly-cisPro motif, important for rejection of L-amino acids motif lies at 137 to 138 (GP).

It belongs to the DTD family. As to quaternary structure, homodimer.

Its subcellular location is the cytoplasm. The catalysed reaction is glycyl-tRNA(Ala) + H2O = tRNA(Ala) + glycine + H(+). It carries out the reaction a D-aminoacyl-tRNA + H2O = a tRNA + a D-alpha-amino acid + H(+). An aminoacyl-tRNA editing enzyme that deacylates mischarged D-aminoacyl-tRNAs. Also deacylates mischarged glycyl-tRNA(Ala), protecting cells against glycine mischarging by AlaRS. Acts via tRNA-based rather than protein-based catalysis; rejects L-amino acids rather than detecting D-amino acids in the active site. By recycling D-aminoacyl-tRNA to D-amino acids and free tRNA molecules, this enzyme counteracts the toxicity associated with the formation of D-aminoacyl-tRNA entities in vivo and helps enforce protein L-homochirality. The protein is D-aminoacyl-tRNA deacylase of Yersinia pestis bv. Antiqua (strain Antiqua).